Reading from the N-terminus, the 792-residue chain is Leucine--tRNA ligase (792 aa).

The short motif at 39 to 50 (PYPSAAGLHLGH) is the 'HIGH' region element. The 'KMSKS' region signature appears at 569–573 (KMSKS). K572 provides a ligand contact to ATP.

It belongs to the class-I aminoacyl-tRNA synthetase family.

The protein localises to the cytoplasm. It carries out the reaction tRNA(Leu) + L-leucine + ATP = L-leucyl-tRNA(Leu) + AMP + diphosphate. This is Leucine--tRNA ligase from Mycoplasma genitalium (strain ATCC 33530 / DSM 19775 / NCTC 10195 / G37) (Mycoplasmoides genitalium).